Consider the following 203-residue polypeptide: dCTP deaminase (203 aa).

Residues 105-110 (RSSLGR), Asp-123, 131-133 (TLE), Gln-152, Tyr-166, Lys-173, and Gln-177 each bind dCTP. Residue Glu-133 is the Proton donor/acceptor of the active site. Residues 164–203 (RPYGVERGSKYQDQDGPQASRIGSDPEFHSDENQAAEHES) form a disordered region. Positions 166-176 (YGVERGSKYQD) are enriched in basic and acidic residues. The segment covering 187 to 203 (SDPEFHSDENQAAEHES) has biased composition (basic and acidic residues).

Belongs to the dCTP deaminase family. As to quaternary structure, homotrimer.

It carries out the reaction dCTP + H2O + H(+) = dUTP + NH4(+). The protein operates within pyrimidine metabolism; dUMP biosynthesis; dUMP from dCTP (dUTP route): step 1/2. Its function is as follows. Catalyzes the deamination of dCTP to dUTP. This is dCTP deaminase from Halorubrum lacusprofundi (strain ATCC 49239 / DSM 5036 / JCM 8891 / ACAM 34).